Consider the following 361-residue polypeptide: Zygote arrest protein 1 (361 aa).

Disordered stretches follow at residues 1–23 (MFPA…AGDG), 98–128 (QPAG…PRSW), and 148–252 (VAGG…EQDK). Phosphothreonine; by CDK1 is present on T154. At S161 the chain carries Phosphoserine; by CDK1. Residues 168–177 (REPEPREVAA) are compositionally biased toward basic and acidic residues. The 3CxxC-type zinc finger occupies 263 to 346 (KYGYYHCKDC…RQDLCGRCKD (84 aa)).

The protein belongs to the ZAR1 family. Interacts with YBX2. Phosphorylation by CDK1 does not regulate formation of MARDO (mitochondria-associated ribonucleoprotein domain) membraneless compartment. Post-translationally, ubiquitinated and degradaded by the proteasome during oocyte meiotic maturation, leading to MARDO (mitochondria-associated ribonucleoprotein domain) membraneless compartment dissolution. In terms of tissue distribution, ovary. Expressed in primary oocytes (from primary through antral follicle stages) and during the progression from Meiosis I to Meiosis II. The mRNA is detected in growing oocytes (early primary follicle, type 3a) through fully grown oocytes (antral follicle, type 8).

Its subcellular location is the cytoplasm. The protein resides in the cytoplasmic ribonucleoprotein granule. Functionally, mRNA-binding protein that mediates formation of MARDO (mitochondria-associated ribonucleoprotein domain), a membraneless compartment that stores maternal mRNAs in oocytes. MARDO assembly around mitochondria is directed by an increase in mitochondrial membrane potential during oocyte growth. Promotes formation of MARDO phase-separated membraneless compartment by undergoing liquid-liquid phase separation upon binding to maternal mRNAs. Binds to the 3'-UTR of maternal mRNAs. Maternal mRNAs stored in the MARDO are translationally repressed. Essential for female fertility and oocyte-to-embryo transition by coordinating maternal mRNA storage, translation and degradation. The sequence is that of Zygote arrest protein 1 from Mus musculus (Mouse).